The primary structure comprises 300 residues: Beta-lactamase (300 aa).

Residues 1 to 29 form the signal peptide; it reads MTMFKTTFRQTATIAVSLISLLVSPMLWA. Ser75 functions as the Acyl-ester intermediate in the catalytic mechanism. 239 to 241 contacts substrate; that stretch reads KTG.

The protein belongs to the class-A beta-lactamase family. In terms of assembly, monomer.

It catalyses the reaction a beta-lactam + H2O = a substituted beta-amino acid. Functionally, hydrolyzes broad-spectrum beta-lactam antibiotics. Active against cephalosporins such as cefuroxime and cefotaxime. The protein is Beta-lactamase (blaB) of Proteus vulgaris.